Reading from the N-terminus, the 308-residue chain is Methionyl-tRNA formyltransferase (308 aa).

109-112 lines the (6S)-5,6,7,8-tetrahydrofolate pocket; that stretch reads SLLP.

This sequence belongs to the Fmt family.

The catalysed reaction is L-methionyl-tRNA(fMet) + (6R)-10-formyltetrahydrofolate = N-formyl-L-methionyl-tRNA(fMet) + (6S)-5,6,7,8-tetrahydrofolate + H(+). Attaches a formyl group to the free amino group of methionyl-tRNA(fMet). The formyl group appears to play a dual role in the initiator identity of N-formylmethionyl-tRNA by promoting its recognition by IF2 and preventing the misappropriation of this tRNA by the elongation apparatus. This is Methionyl-tRNA formyltransferase from Phenylobacterium zucineum (strain HLK1).